Here is a 318-residue protein sequence, read N- to C-terminus: Quinolinate synthase (318 aa).

Iminosuccinate is bound by residues H34 and S51. C96 lines the [4Fe-4S] cluster pocket. Residues 122–124 and S139 contribute to the iminosuccinate site; that span reads YIN. C182 contacts [4Fe-4S] cluster. Residues 208–210 and T225 each bind iminosuccinate; that span reads HPE. Residue C275 participates in [4Fe-4S] cluster binding.

It belongs to the quinolinate synthase family. Type 2 subfamily. [4Fe-4S] cluster is required as a cofactor.

The protein resides in the cytoplasm. It catalyses the reaction iminosuccinate + dihydroxyacetone phosphate = quinolinate + phosphate + 2 H2O + H(+). Its pathway is cofactor biosynthesis; NAD(+) biosynthesis; quinolinate from iminoaspartate: step 1/1. Catalyzes the condensation of iminoaspartate with dihydroxyacetone phosphate to form quinolinate. This Synechocystis sp. (strain ATCC 27184 / PCC 6803 / Kazusa) protein is Quinolinate synthase.